We begin with the raw amino-acid sequence, 975 residues long: Probable outer membrane protein PmpA (975 aa).

The signal sequence occupies residues 1–51 (MNRVIEIHAHYDQRQLSQSPNTNFLVHHPYLTLIPKFLLGALIVYAPYSFA). An Autotransporter domain is found at 699–975 (RSLIPTSYFG…SLSCGGYVGF (277 aa)).

Belongs to the PMP outer membrane protein family.

The protein localises to the secreted. Its subcellular location is the cell wall. It is found in the cell outer membrane. This chain is Probable outer membrane protein PmpA (pmpA), found in Chlamydia trachomatis serovar D (strain ATCC VR-885 / DSM 19411 / UW-3/Cx).